The following is a 421-amino-acid chain: Aspartokinase (421 aa).

7 to 10 (KYGG) contacts ATP. 25–30 (RIVATK) contributes to the substrate binding site. S41 is an ATP binding site. Substrate is bound by residues 45–49 (DTTDE), E74, 125–126 (LD), 151–154 (RGGS), and S154. Residues 174-175 (SD), 180-185 (YTADPR), and K210 each bind ATP. ACT domains are found at residues 267 to 343 (VTVL…YDDQ) and 349 to 421 (LVGA…GTGR). Residues D274, 274 to 279 (DKPGEA), 292 to 294 (NID), Q298, 360 to 361 (VT), 374 to 375 (NV), and 381 to 382 (SE) contribute to the substrate site.

This sequence belongs to the aspartokinase family. Tetramer consisting of 2 isoforms Alpha (catalytic and regulation) and of a homodimer of 2 isoforms Beta (regulation).

It catalyses the reaction L-aspartate + ATP = 4-phospho-L-aspartate + ADP. Its pathway is amino-acid biosynthesis; L-lysine biosynthesis via DAP pathway; (S)-tetrahydrodipicolinate from L-aspartate: step 1/4. It participates in amino-acid biosynthesis; L-methionine biosynthesis via de novo pathway; L-homoserine from L-aspartate: step 1/3. It functions in the pathway amino-acid biosynthesis; L-threonine biosynthesis; L-threonine from L-aspartate: step 1/5. Catalyzes the phosphorylation of the beta-carboxyl group of aspartic acid with ATP to yield 4-phospho-L-aspartate, which is involved in the branched biosynthetic pathway leading to the biosynthesis of amino acids lysine, threonine, isoleucine and methionine. The chain is Aspartokinase (lysC) from Corynebacterium efficiens (strain DSM 44549 / YS-314 / AJ 12310 / JCM 11189 / NBRC 100395).